We begin with the raw amino-acid sequence, 615 residues long: Vitamin B12 transporter BtuB (615 aa).

Positions 1 to 20 (MIKKVSLMTALSVTAFSGWA) are cleaved as a signal peptide. Positions 25 to 32 (DSLVVTAN) match the TonB box motif. One can recognise a TBDR plug domain in the interval 37–151 (PANTVLAPTS…IGGVVNIITT (115 aa)). Residues serine 84, asparagine 91, and 109–110 (VT) each bind cyanocob(III)alamin. The region spanning 154 to 615 (KDGTTLNAGV…EYTLSGSYTF (462 aa)) is the TBDR beta-barrel domain. Transmembrane regions (beta stranded) follow at residues 157 to 164 (TTLNAGVG), 168 to 177 (YQNYGGSTQQ), and 183 to 194 (TRVTLAGDYTYT). Ca(2+)-binding residues include aspartate 198, glutamine 210, aspartate 212, and aspartate 214. The next 2 beta stranded transmembrane spans lie at 216 to 226 (YMNKTIYGALE) and 231 to 247 (DQWS…NRTA). Tyrosine 248 and aspartate 249 together coordinate Ca(2+). Alanine 250 is a cyanocob(III)alamin binding site. Residue aspartate 262 coordinates Ca(2+). The next 17 beta stranded transmembrane spans lie at 264 to 278 (RQLY…LRFN), 280 to 297 (GIFH…KDYN), 310 to 326 (TLDE…NSVD), 329 to 338 (HGNVGAGVDW), 354 to 370 (TNLR…QKFG), 372 to 382 (FTLEGAARSDD), 386 to 401 (FGRH…WEFI), 404 to 418 (YRFI…KAPN), 435 to 444 (ESKQWEGAFE), 450 to 459 (VSWRVSAYRN), 474 to 491 (YYNV…TASF), 495 to 510 (PLTH…ARNA), 518 to 530 (RRAK…QLDT), 536 to 551 (DWSL…YDTD), 559 to 573 (KVKM…LAVS), 586 to 597 (IANLFDKDYETV), and 603 to 615 (AGRE…SYTF). Threonine 310 is a cyanocob(III)alamin binding site. Residue arginine 518 participates in cyanocob(III)alamin binding. Positions 598–615 (YGYETAGREYTLSGSYTF) match the TonB C-terminal box motif.

It belongs to the TonB-dependent receptor family. BtuB (TC 1.B.14.3.1) subfamily.

Its subcellular location is the cell outer membrane. In terms of biological role, involved in the active translocation of vitamin B12 (cyanocobalamin) across the outer membrane to the periplasmic space. It derives its energy for transport by interacting with the trans-periplasmic membrane protein TonB. The protein is Vitamin B12 transporter BtuB of Enterobacter sp. (strain 638).